Reading from the N-terminus, the 399-residue chain is MAKEKFARNKPHVNIGTIGHVDHGKTTLTAAITAVLAVTNGAKMMDYDAIDNAPEERERGITIATSHVEYETNNRHYAHVDCPGHADYVKNMITGAAQMDGAILVVSAADGPMPQTREHILLSKQVGVPYIVVFMNKEDMVDDEELLELVEMEIRELLDMYDFPGDDTPIVAGSAKEALDEAKTGTLGPWSAKIQKLMAAVDEYIPEPTREVDRDFLMPVEDVFSISGRGTVVTGRIERGTVKIGDAIEIVGIRDTQKTTVTGIEMFRKEMDQGLAGDNCGVLVRGIGKDDVERGQVLCKPGTINPHTKFTAEIYVLSKEEGGRHTPFFTNYRPQFYVRTTDVTGAIYLPEGTEMVMPGDNVSITVELIHPIAMEKGTKFAIREGGRTVGAGVVAEILA.

Residues 10-209 (KPHVNIGTIG…AVDEYIPEPT (200 aa)) enclose the tr-type G domain. A G1 region spans residues 19–26 (GHVDHGKT). Residue 19 to 26 (GHVDHGKT) coordinates GTP. T26 serves as a coordination point for Mg(2+). The G2 stretch occupies residues 60–64 (GITIA). The tract at residues 81–84 (DCPG) is G3. Residues 81–85 (DCPGH) and 136–139 (NKED) contribute to the GTP site. The interval 136–139 (NKED) is G4. The segment at 174 to 176 (SAK) is G5.

This sequence belongs to the TRAFAC class translation factor GTPase superfamily. Classic translation factor GTPase family. EF-Tu/EF-1A subfamily. In terms of assembly, monomer.

It localises to the cytoplasm. The enzyme catalyses GTP + H2O = GDP + phosphate + H(+). In terms of biological role, GTP hydrolase that promotes the GTP-dependent binding of aminoacyl-tRNA to the A-site of ribosomes during protein biosynthesis. This is Elongation factor Tu from Sulfurimonas denitrificans (strain ATCC 33889 / DSM 1251) (Thiomicrospira denitrificans (strain ATCC 33889 / DSM 1251)).